We begin with the raw amino-acid sequence, 516 residues long: GMP synthase [glutamine-hydrolyzing] (516 aa).

Residues 10–201 (KIIVLDFGSQ…AFDVCGAVAN (192 aa)) enclose the Glutamine amidotransferase type-1 domain. The Nucleophile role is filled by Cys-87. Catalysis depends on residues His-175 and Glu-177. In terms of domain architecture, GMPS ATP-PPase spans 202–391 (WTMADFIDMQ…LGIPHDLVWR (190 aa)). 229–235 (SGGVDSS) is an ATP binding site.

In terms of assembly, homodimer.

The enzyme catalyses XMP + L-glutamine + ATP + H2O = GMP + L-glutamate + AMP + diphosphate + 2 H(+). Its pathway is purine metabolism; GMP biosynthesis; GMP from XMP (L-Gln route): step 1/1. In terms of biological role, catalyzes the synthesis of GMP from XMP. The protein is GMP synthase [glutamine-hydrolyzing] of Lactobacillus acidophilus (strain ATCC 700396 / NCK56 / N2 / NCFM).